The following is a 348-amino-acid chain: Phospho-2-dehydro-3-deoxyheptonate aldolase, Trp-sensitive (348 aa).

It belongs to the class-I DAHP synthase family.

The catalysed reaction is D-erythrose 4-phosphate + phosphoenolpyruvate + H2O = 7-phospho-2-dehydro-3-deoxy-D-arabino-heptonate + phosphate. It participates in metabolic intermediate biosynthesis; chorismate biosynthesis; chorismate from D-erythrose 4-phosphate and phosphoenolpyruvate: step 1/7. Its function is as follows. Stereospecific condensation of phosphoenolpyruvate (PEP) and D-erythrose-4-phosphate (E4P) giving rise to 3-deoxy-D-arabino-heptulosonate-7-phosphate (DAHP). The sequence is that of Phospho-2-dehydro-3-deoxyheptonate aldolase, Trp-sensitive (aroH) from Escherichia coli (strain K12).